The chain runs to 228 residues: Phosphoribosylformylglycinamidine synthase subunit PurQ (228 aa).

Residues Lys2–Arg225 form the Glutamine amidotransferase type-1 domain. Catalysis depends on Cys86, which acts as the Nucleophile. Catalysis depends on residues His194 and Glu196.

Part of the FGAM synthase complex composed of 1 PurL, 1 PurQ and 2 PurS subunits.

The protein localises to the cytoplasm. It carries out the reaction N(2)-formyl-N(1)-(5-phospho-beta-D-ribosyl)glycinamide + L-glutamine + ATP + H2O = 2-formamido-N(1)-(5-O-phospho-beta-D-ribosyl)acetamidine + L-glutamate + ADP + phosphate + H(+). The enzyme catalyses L-glutamine + H2O = L-glutamate + NH4(+). It participates in purine metabolism; IMP biosynthesis via de novo pathway; 5-amino-1-(5-phospho-D-ribosyl)imidazole from N(2)-formyl-N(1)-(5-phospho-D-ribosyl)glycinamide: step 1/2. Part of the phosphoribosylformylglycinamidine synthase complex involved in the purines biosynthetic pathway. Catalyzes the ATP-dependent conversion of formylglycinamide ribonucleotide (FGAR) and glutamine to yield formylglycinamidine ribonucleotide (FGAM) and glutamate. The FGAM synthase complex is composed of three subunits. PurQ produces an ammonia molecule by converting glutamine to glutamate. PurL transfers the ammonia molecule to FGAR to form FGAM in an ATP-dependent manner. PurS interacts with PurQ and PurL and is thought to assist in the transfer of the ammonia molecule from PurQ to PurL. The protein is Phosphoribosylformylglycinamidine synthase subunit PurQ of Lacticaseibacillus paracasei (strain ATCC 334 / BCRC 17002 / CCUG 31169 / CIP 107868 / KCTC 3260 / NRRL B-441) (Lactobacillus paracasei).